The chain runs to 321 residues: Peptide transport system permease protein SapB (321 aa).

8 helical membrane-spanning segments follow: residues 8 to 28 (HILW…VILL), 41 to 61 (IYIG…GITY), 82 to 102 (CFIT…ISAV), 117 to 137 (YVGL…VAAL), 150 to 170 (LLYE…FMEV), 180 to 200 (ILQH…MEII), 249 to 269 (VFTL…WPGI), and 289 to 309 (VIVI…FTFI). The 229-residue stretch at 75 to 303 (LPPTLELCFI…VCIILIDTFT (229 aa)) folds into the ABC transmembrane type-1 domain.

It belongs to the binding-protein-dependent transport system permease family. OppBC subfamily.

The protein localises to the cell inner membrane. In terms of biological role, involved in a peptide intake transport system that plays a role in the resistance to antimicrobial peptides. The protein is Peptide transport system permease protein SapB (sapB) of Haemophilus influenzae (strain ATCC 51907 / DSM 11121 / KW20 / Rd).